The following is a 170-amino-acid chain: Protein SprT (170 aa).

A SprT-like domain is found at Leu22 to Arg163. His78 lines the Zn(2+) pocket. Glu79 is a catalytic residue. His82 provides a ligand contact to Zn(2+).

The protein belongs to the SprT family. Zn(2+) serves as cofactor.

The protein localises to the cytoplasm. The polypeptide is Protein SprT (Pectobacterium atrosepticum (strain SCRI 1043 / ATCC BAA-672) (Erwinia carotovora subsp. atroseptica)).